A 186-amino-acid chain; its full sequence is Elongation factor P (186 aa).

This sequence belongs to the elongation factor P family.

The protein localises to the cytoplasm. It participates in protein biosynthesis; polypeptide chain elongation. Functionally, involved in peptide bond synthesis. Stimulates efficient translation and peptide-bond synthesis on native or reconstituted 70S ribosomes in vitro. Probably functions indirectly by altering the affinity of the ribosome for aminoacyl-tRNA, thus increasing their reactivity as acceptors for peptidyl transferase. This Polynucleobacter asymbioticus (strain DSM 18221 / CIP 109841 / QLW-P1DMWA-1) (Polynucleobacter necessarius subsp. asymbioticus) protein is Elongation factor P.